The chain runs to 151 residues: MAELKVTAIKEGTVIDHIPAGKGLKVIEILHLSRPNGGVLLLASNVHSKKLGKKDIVKIEGKFLSEEEVNKISLIAPTATVNIVRDYGVAEKFNVEIPDEIVGILRCANPNCVSNHEYVTSKFYVVSREPLKVRCHYCERTMEESEILSNL.

Zn(2+)-binding residues include C107, C112, C135, and C138.

Belongs to the PyrI family. Contains catalytic and regulatory chains. The cofactor is Zn(2+).

Its function is as follows. Involved in allosteric regulation of aspartate carbamoyltransferase. This is Aspartate carbamoyltransferase regulatory chain from Thermococcus onnurineus (strain NA1).